Consider the following 98-residue polypeptide: Small ribosomal subunit protein bS6 (98 aa).

The protein belongs to the bacterial ribosomal protein bS6 family.

Functionally, binds together with bS18 to 16S ribosomal RNA. The protein is Small ribosomal subunit protein bS6 of Staphylococcus haemolyticus (strain JCSC1435).